Here is a 1023-residue protein sequence, read N- to C-terminus: Presequence protease, mitochondrial (1023 aa).

The N-terminal 62 residues, 1-62 (MFRQSKTIIT…PDLFLTAVKL (62 aa)), are a transit peptide targeting the mitochondrion. Residue His-99 participates in Zn(2+) binding. Catalysis depends on Glu-102, which acts as the Proton acceptor. Zn(2+)-binding residues include His-103 and Glu-200. A disulfide bridge connects residues Cys-114 and Cys-551.

The protein belongs to the peptidase M16 family. PreP subfamily. In terms of assembly, monomer and homodimer; homodimerization is induced by binding of the substrate. It depends on Zn(2+) as a cofactor. Post-translationally, a disulfide bond locks the enzyme in the closed conformation preventing substrate entry into the catalytic chamber.

It localises to the mitochondrion matrix. Mainly exists in a closed and catalytically competent conformation but a closed-to-open switch allows substrate entry into the catalytic chamber. Substrate binding induces closure and dimerization. A disulfide bond may lock the enzyme in a closed conformation preventing substrate entry into the catalytic chamber, participating in redox regulation of the enzyme. Inhibited by metal-chelating agents. Inhibited by nickel and zinc excess, and slightly activated by manganese. Functionally, metalloendopeptidase of the mitochondrial matrix that functions in peptide cleavage and degradation rather than in protein processing. Has an ATP-independent activity. Specifically cleaves peptides in the range of 5 to 65 residues. Shows a preference for cleavage after small polar residues and before basic residues, but without any positional preference. Degrades the transit peptides of mitochondrial proteins after their cleavage. Also degrades other unstructured peptides. The chain is Presequence protease, mitochondrial (pitrm1) from Danio rerio (Zebrafish).